The chain runs to 291 residues: Acidic endochitinase (291 aa).

The signal sequence occupies residues 1–22 (MIKYSFLLTALVLFLRALKLEA). Residues 23–291 (GDIVIYWGQN…GYSSAIKANV (269 aa)) form the GH18 domain. 2 disulfides stabilise this stretch: Cys-42–Cys-89 and Cys-72–Cys-79. The active-site Proton donor is Glu-149. A disulfide bridge connects residues Cys-180 and Cys-209.

This sequence belongs to the glycosyl hydrolase 18 family. Chitinase class II subfamily.

The protein resides in the secreted. It is found in the cell wall. It catalyses the reaction Random endo-hydrolysis of N-acetyl-beta-D-glucosaminide (1-&gt;4)-beta-linkages in chitin and chitodextrins.. Functionally, this protein functions as a defense against chitin containing fungal pathogens. The protein is Acidic endochitinase of Nicotiana tabacum (Common tobacco).